A 96-amino-acid chain; its full sequence is Small cysteine and glycine repeat-containing protein 7 (96 aa).

A 14 X 2 AA repeats of CG region spans residues 4-80 (CGCGSCGGCG…TCGSCGCGCG (77 aa)).

The protein belongs to the KRTAP type 28 family.

Its function is as follows. In the hair cortex, hair keratin intermediate filaments are embedded in an interfilamentous matrix, consisting of hair keratin-associated proteins (KRTAP), which are essential for the formation of a rigid and resistant hair shaft through their extensive disulfide bond cross-linking with abundant cysteine residues of hair keratins. The matrix proteins include the high-sulfur and high-glycine-tyrosine keratins. This Homo sapiens (Human) protein is Small cysteine and glycine repeat-containing protein 7.